Here is a 715-residue protein sequence, read N- to C-terminus: uncharacterized protein (715 aa).

A helical membrane pass occupies residues 688–708 (VWKFNPALYSTITNIFLLIIF).

It belongs to the plectrovirus ORF1 family.

The protein localises to the host membrane. This is an uncharacterized protein from Spiroplasma virus SpV1-R8A2 B (SpV1).